The chain runs to 206 residues: dITP/XTP pyrophosphatase (206 aa).

7–12 (SNNAKK) serves as a coordination point for substrate. D72 (proton acceptor) is an active-site residue. A Mg(2+)-binding site is contributed by D72. Substrate is bound by residues S73, 155–158 (FGYD), K182, and 187–188 (HR).

The protein belongs to the HAM1 NTPase family. In terms of assembly, homodimer. It depends on Mg(2+) as a cofactor.

It carries out the reaction XTP + H2O = XMP + diphosphate + H(+). It catalyses the reaction dITP + H2O = dIMP + diphosphate + H(+). The enzyme catalyses ITP + H2O = IMP + diphosphate + H(+). In terms of biological role, pyrophosphatase that catalyzes the hydrolysis of nucleoside triphosphates to their monophosphate derivatives, with a high preference for the non-canonical purine nucleotides XTP (xanthosine triphosphate), dITP (deoxyinosine triphosphate) and ITP. Seems to function as a house-cleaning enzyme that removes non-canonical purine nucleotides from the nucleotide pool, thus preventing their incorporation into DNA/RNA and avoiding chromosomal lesions. This Corynebacterium glutamicum (strain ATCC 13032 / DSM 20300 / JCM 1318 / BCRC 11384 / CCUG 27702 / LMG 3730 / NBRC 12168 / NCIMB 10025 / NRRL B-2784 / 534) protein is dITP/XTP pyrophosphatase.